We begin with the raw amino-acid sequence, 655 residues long: Broad substrate specificity ATP-binding cassette transporter ABCG2 (655 aa).

Residues methionine 1 to serine 395 lie on the Cytoplasmic side of the membrane. Positions leucine 36–proline 285 constitute an ABC transporter domain. ATP contacts are provided by residues glycine 79–serine 86, arginine 183–glutamate 189, glutamate 210, and histidine 242. The region spanning leucine 389–leucine 651 is the ABC transmembrane type-2 domain. The helical transmembrane segment at isoleucine 396–leucine 416 threads the bilayer. At lysine 417 to glycine 428 the chain is on the extracellular side. Residues valine 429–valine 449 traverse the membrane as a helical segment. Residues valine 450–aspartate 477 lie on the Cytoplasmic side of the membrane. Residues leucine 478–glycine 498 traverse the membrane as a helical segment. The Extracellular segment spans residues leucine 499 to phenylalanine 506. Residues phenylalanine 507 to isoleucine 527 form a helical membrane-spanning segment. Residues alanine 528 to serine 535 lie on the Cytoplasmic side of the membrane. Residues isoleucine 536–valine 556 traverse the membrane as a helical segment. Over asparagine 557–histidine 630 the chain is Extracellular. Cysteine 592 and cysteine 608 are oxidised to a cystine. N-linked (GlcNAc...) asparagine glycosylation is found at asparagine 596 and asparagine 600. The chain crosses the membrane as a helical span at residues valine 631–leucine 651. Over lysine 652 to serine 655 the chain is Cytoplasmic.

The protein belongs to the ABC transporter superfamily. ABCG family. Eye pigment precursor importer (TC 3.A.1.204) subfamily. As to quaternary structure, homodimer; disulfide-linked. The minimal functional unit is a homodimer, but the major oligomeric form in plasma membrane is a homotetramer with possibility of higher order oligomerization up to homododecamers. In terms of processing, N-glycosylated. Glycosylation-deficient ABCG2 is normally expressed and functional. Phosphorylated. Phosphorylation may regulate the localization to the plasma membrane, the homooligomerization and therefore, the activity of the transporter.

The protein resides in the cell membrane. Its subcellular location is the apical cell membrane. The protein localises to the mitochondrion membrane. The catalysed reaction is ATP + H2O + xenobioticSide 1 = ADP + phosphate + xenobioticSide 2.. It carries out the reaction urate(in) + ATP + H2O = urate(out) + ADP + phosphate + H(+). The enzyme catalyses indoxyl sulfate(in) + ATP + H2O = indoxyl sulfate(out) + ADP + phosphate + H(+). It catalyses the reaction sphing-4-enine 1-phosphate(in) + ATP + H2O = sphing-4-enine 1-phosphate(out) + ADP + phosphate + H(+). The catalysed reaction is estrone 3-sulfate(in) + ATP + H2O = estrone 3-sulfate(out) + ADP + phosphate + H(+). It carries out the reaction dehydroepiandrosterone 3-sulfate(in) + ATP + H2O = dehydroepiandrosterone 3-sulfate(out) + ADP + phosphate + H(+). The enzyme catalyses 4-methylumbelliferone sulfate(in) + ATP + H2O = 4-methylumbelliferone sulfate(out) + ADP + phosphate + H(+). It catalyses the reaction 5,7-dimethyl-2-methylamino-4-(3-pyridylmethyl)-1,3-benzothiazol-6-yl beta-D-glucuronate(in) + ATP + H2O = 5,7-dimethyl-2-methylamino-4-(3-pyridylmethyl)-1,3-benzothiazol-6-yl beta-D-glucuronate(out) + ADP + phosphate + H(+). The catalysed reaction is 4-methylumbelliferone beta-D-glucuronate(in) + ATP + H2O = 4-methylumbelliferone beta-D-glucuronate(out) + ADP + phosphate + H(+). It carries out the reaction 5,7-dimethyl-2-methylamino-4-(3-pyridylmethyl)-1,3-benzothiazol-6-yl sulfate(in) + ATP + H2O = 5,7-dimethyl-2-methylamino-4-(3-pyridylmethyl)-1,3-benzothiazol-6-yl sulfate(out) + ADP + phosphate + H(+). The enzyme catalyses 17beta-estradiol 17-O-(beta-D-glucuronate)(in) + ATP + H2O = 17beta-estradiol 17-O-(beta-D-glucuronate)(out) + ADP + phosphate + H(+). It catalyses the reaction methotrexate(in) + ATP + H2O = methotrexate(out) + ADP + phosphate + H(+). The catalysed reaction is riboflavin(in) + ATP + H2O = riboflavin(out) + ADP + phosphate + H(+). It carries out the reaction pheophorbide a(in) + ATP + H2O = pheophorbide a(out) + ADP + phosphate + H(+). The enzyme catalyses itaconate(in) + ATP + H2O = itaconate(out) + ADP + phosphate + H(+). Broad substrate specificity ATP-dependent transporter of the ATP-binding cassette (ABC) family that actively extrudes a wide variety of physiological compounds, dietary toxins and xenobiotics from cells. Involved in porphyrin homeostasis, mediating the export of protoporphyrin IX (PPIX) from both mitochondria to cytosol and cytosol to extracellular space, it also functions in the cellular export of heme. Also mediates the efflux of sphingosine-1-P from cells. Acts as a urate exporter functioning in both renal and extrarenal urate excretion. In kidney, it also functions as a physiological exporter of the uremic toxin indoxyl sulfate. Also involved in the excretion of steroids like estrone 3-sulfate/E1S, 3beta-sulfooxy-androst-5-en-17-one/DHEAS, and other sulfate conjugates. Mediates the secretion of the riboflavin and biotin vitamins into milk. Extrudes pheophorbide a, a phototoxic porphyrin catabolite of chlorophyll, reducing its bioavailability. Plays an important role in the exclusion of xenobiotics from the brain. It confers to cells a resistance to multiple drugs and other xenobiotics including mitoxantrone, pheophorbide, camptothecin, methotrexate, azidothymidine, and the anthracyclines daunorubicin and doxorubicin, through the control of their efflux. In placenta, it limits the penetration of drugs from the maternal plasma into the fetus. May play a role in early stem cell self-renewal by blocking differentiation. In inflammatory macrophages, exports itaconate from the cytosol to the extracellular compartment and limits the activation of TFEB-dependent lysosome biogenesis involved in antibacterial innate immune response. This is Broad substrate specificity ATP-binding cassette transporter ABCG2 (ABCG2) from Bos taurus (Bovine).